The following is a 387-amino-acid chain: Galactokinase (387 aa).

33–36 contacts substrate; sequence EHID. ATP-binding positions include Ser-67 and 124 to 130; that span reads GAGLSSS. Ser-130 and Glu-162 together coordinate Mg(2+). Asp-174 (proton acceptor) is an active-site residue. A substrate-binding site is contributed by Tyr-224.

It belongs to the GHMP kinase family. GalK subfamily.

Its subcellular location is the cytoplasm. The enzyme catalyses alpha-D-galactose + ATP = alpha-D-galactose 1-phosphate + ADP + H(+). The protein operates within carbohydrate metabolism; galactose metabolism. Its function is as follows. Catalyzes the transfer of the gamma-phosphate of ATP to D-galactose to form alpha-D-galactose-1-phosphate (Gal-1-P). This is Galactokinase from Clostridium perfringens (strain ATCC 13124 / DSM 756 / JCM 1290 / NCIMB 6125 / NCTC 8237 / Type A).